We begin with the raw amino-acid sequence, 165 residues long: Large ribosomal subunit protein uL11 (165 aa).

Position 38 is a phosphoserine (serine 38). Lysine 40 participates in a covalent cross-link: Glycyl lysine isopeptide (Lys-Gly) (interchain with G-Cter in SUMO2). Lysine 48 is covalently cross-linked (Glycyl lysine isopeptide (Lys-Gly) (interchain with G-Cter in ubiquitin)). Lysine 54 is modified (N6-acetyllysine). A Glycyl lysine isopeptide (Lys-Gly) (interchain with G-Cter in ubiquitin) cross-link involves residue lysine 83. Serine 165 carries the post-translational modification Phosphoserine.

This sequence belongs to the universal ribosomal protein uL11 family. In terms of assembly, component of the large ribosomal subunit. Mature ribosomes consist of a small (40S) and a large (60S) subunit. The 40S subunit contains about 33 different proteins and 1 molecule of RNA (18S). The 60S subunit contains about 49 different proteins and 3 molecules of RNA (28S, 5.8S and 5S). In terms of processing, ubiquitinated at Lys-48 and Lys-83 by RNF14 and RNF25 in response to ribosome collisions (ribosome stalling).

The protein localises to the cytoplasm. Component of the large ribosomal subunit. The ribosome is a large ribonucleoprotein complex responsible for the synthesis of proteins in the cell. Binds directly to 26S ribosomal RNA. This Chinchilla lanigera (Long-tailed chinchilla) protein is Large ribosomal subunit protein uL11 (RPL12).